The primary structure comprises 115 residues: Transmembrane protein 14C (115 aa).

Transmembrane regions (helical) follow at residues 8-28, 33-53, 63-83, and 88-108; these read LVPL…GGII, AGSV…GLGA, VWVF…RFYN, and MPAG…VAKI.

It belongs to the TMEM14 family.

It is found in the mitochondrion membrane. Its function is as follows. Required for normal heme biosynthesis. The protein is Transmembrane protein 14C (Tmem14c) of Rattus norvegicus (Rat).